A 443-amino-acid polypeptide reads, in one-letter code: UDP-N-acetylmuramate--L-alanine ligase (443 aa).

Position 110–116 (110–116 (GAHGKTS)) interacts with ATP.

Belongs to the MurCDEF family.

It is found in the cytoplasm. The catalysed reaction is UDP-N-acetyl-alpha-D-muramate + L-alanine + ATP = UDP-N-acetyl-alpha-D-muramoyl-L-alanine + ADP + phosphate + H(+). The protein operates within cell wall biogenesis; peptidoglycan biosynthesis. Its function is as follows. Cell wall formation. The protein is UDP-N-acetylmuramate--L-alanine ligase of Lactococcus lactis subsp. cremoris (strain MG1363).